We begin with the raw amino-acid sequence, 277 residues long: 2-dehydro-3-deoxyphosphooctonate aldolase (277 aa).

The protein belongs to the KdsA family.

The protein resides in the cytoplasm. It catalyses the reaction D-arabinose 5-phosphate + phosphoenolpyruvate + H2O = 3-deoxy-alpha-D-manno-2-octulosonate-8-phosphate + phosphate. Its pathway is carbohydrate biosynthesis; 3-deoxy-D-manno-octulosonate biosynthesis; 3-deoxy-D-manno-octulosonate from D-ribulose 5-phosphate: step 2/3. It participates in bacterial outer membrane biogenesis; lipopolysaccharide biosynthesis. This chain is 2-dehydro-3-deoxyphosphooctonate aldolase, found in Brucella melitensis biotype 2 (strain ATCC 23457).